Consider the following 95-residue polypeptide: UPF0473 protein PEPE_1260 (95 aa).

Belongs to the UPF0473 family.

In Pediococcus pentosaceus (strain ATCC 25745 / CCUG 21536 / LMG 10740 / 183-1w), this protein is UPF0473 protein PEPE_1260.